Reading from the N-terminus, the 24-residue chain is VGGLIAYDNIEISQIPVGDGVTLC.

The protein belongs to the class I-like SAM-binding methyltransferase superfamily. Cation-dependent O-methyltransferase family. CCoAMT subfamily. A divalent metal cation is required as a cofactor.

It carries out the reaction (E)-caffeoyl-CoA + S-adenosyl-L-methionine = (E)-feruloyl-CoA + S-adenosyl-L-homocysteine + H(+). The protein operates within aromatic compound metabolism; phenylpropanoid biosynthesis. In terms of biological role, methylates caffeoyl-CoA to feruloyl-CoA and 5-hydroxyferuloyl-CoA to sinapoyl-CoA. Plays a role in the synthesis of feruloylated polysaccharides. Involved in the reinforcement of the plant cell wall. Also involved in the responding to wounding or pathogen challenge by the increased formation of cell wall-bound ferulic acid polymers. This is Probable caffeoyl-CoA O-methyltransferase from Pinus pinaster (Maritime pine).